Here is a 78-residue protein sequence, read N- to C-terminus: Small ribosomal subunit protein bS18 (78 aa).

It belongs to the bacterial ribosomal protein bS18 family. In terms of assembly, part of the 30S ribosomal subunit. Forms a tight heterodimer with protein bS6.

Functionally, binds as a heterodimer with protein bS6 to the central domain of the 16S rRNA, where it helps stabilize the platform of the 30S subunit. The chain is Small ribosomal subunit protein bS18 from Geobacillus sp. (strain WCH70).